The sequence spans 315 residues: Methionyl-tRNA formyltransferase (315 aa).

115–118 (SLLP) provides a ligand contact to (6S)-5,6,7,8-tetrahydrofolate.

The protein belongs to the Fmt family.

The catalysed reaction is L-methionyl-tRNA(fMet) + (6R)-10-formyltetrahydrofolate = N-formyl-L-methionyl-tRNA(fMet) + (6S)-5,6,7,8-tetrahydrofolate + H(+). Attaches a formyl group to the free amino group of methionyl-tRNA(fMet). The formyl group appears to play a dual role in the initiator identity of N-formylmethionyl-tRNA by promoting its recognition by IF2 and preventing the misappropriation of this tRNA by the elongation apparatus. The protein is Methionyl-tRNA formyltransferase of Dehalococcoides mccartyi (strain ATCC BAA-2100 / JCM 16839 / KCTC 5957 / BAV1).